Here is a 348-residue protein sequence, read N- to C-terminus: Dual-specificity RNA methyltransferase RlmN (348 aa).

Residue glutamate 94 is the Proton acceptor of the active site. In terms of domain architecture, Radical SAM core spans 100–330 (GKHNWTACIS…TAIIRASRGR (231 aa)). Cysteine 107 and cysteine 336 are joined by a disulfide. Residues cysteine 114, cysteine 118, and cysteine 121 each coordinate [4Fe-4S] cluster. S-adenosyl-L-methionine-binding positions include 163–164 (GE), serine 195, 217–219 (SLN), and asparagine 293. The active-site S-methylcysteine intermediate is cysteine 336.

The protein belongs to the radical SAM superfamily. RlmN family. Requires [4Fe-4S] cluster as cofactor.

Its subcellular location is the cytoplasm. It carries out the reaction adenosine(2503) in 23S rRNA + 2 reduced [2Fe-2S]-[ferredoxin] + 2 S-adenosyl-L-methionine = 2-methyladenosine(2503) in 23S rRNA + 5'-deoxyadenosine + L-methionine + 2 oxidized [2Fe-2S]-[ferredoxin] + S-adenosyl-L-homocysteine. The catalysed reaction is adenosine(37) in tRNA + 2 reduced [2Fe-2S]-[ferredoxin] + 2 S-adenosyl-L-methionine = 2-methyladenosine(37) in tRNA + 5'-deoxyadenosine + L-methionine + 2 oxidized [2Fe-2S]-[ferredoxin] + S-adenosyl-L-homocysteine. Functionally, specifically methylates position 2 of adenine 2503 in 23S rRNA and position 2 of adenine 37 in tRNAs. m2A2503 modification seems to play a crucial role in the proofreading step occurring at the peptidyl transferase center and thus would serve to optimize ribosomal fidelity. The protein is Dual-specificity RNA methyltransferase RlmN of Syntrophus aciditrophicus (strain SB).